We begin with the raw amino-acid sequence, 489 residues long: Rhamnulokinase (489 aa).

13–17 (ASSGR) is an ATP binding site. A disulfide bond links cysteine 68 and cysteine 222. Substrate-binding positions include glycine 83 and 236–238 (HDT). Aspartate 237 (proton acceptor) is an active-site residue. Residue threonine 259 participates in ATP binding. Asparagine 296 contacts substrate. Glutamine 304 lines the ATP pocket. Cysteine 353 and cysteine 370 are oxidised to a cystine. Glycine 402 contacts ATP. A disulfide bridge connects residues cysteine 413 and cysteine 417.

It belongs to the rhamnulokinase family. Monomer. Requires Mg(2+) as cofactor.

It catalyses the reaction L-rhamnulose + ATP = L-rhamnulose 1-phosphate + ADP + H(+). It participates in carbohydrate degradation; L-rhamnose degradation; glycerone phosphate from L-rhamnose: step 2/3. In terms of biological role, involved in the catabolism of L-rhamnose (6-deoxy-L-mannose). Catalyzes the transfer of the gamma-phosphate group from ATP to the 1-hydroxyl group of L-rhamnulose to yield L-rhamnulose 1-phosphate. This chain is Rhamnulokinase, found in Escherichia fergusonii (strain ATCC 35469 / DSM 13698 / CCUG 18766 / IAM 14443 / JCM 21226 / LMG 7866 / NBRC 102419 / NCTC 12128 / CDC 0568-73).